We begin with the raw amino-acid sequence, 175 residues long: Ferritin light chain (175 aa).

Positions glutamine 7–serine 156 constitute a Ferritin-like diiron domain. Positions 54, 57, 58, 61, and 64 each coordinate Fe cation.

Belongs to the ferritin family. In terms of assembly, oligomer of 24 subunits. There are two types of subunits: L (light) chain and H (heavy) chain. The major chain can be light or heavy, depending on the species and tissue type. The functional molecule forms a roughly spherical shell with a diameter of 12 nm and contains a central cavity into which the insoluble mineral iron core is deposited. Interacts with NCOA4.

The protein resides in the cytoplasmic vesicle. The protein localises to the autophagosome. Its subcellular location is the cytoplasm. It is found in the autolysosome. In terms of biological role, stores iron in a soluble, non-toxic, readily available form. Important for iron homeostasis. Iron is taken up in the ferrous form and deposited as ferric hydroxides after oxidation. Also plays a role in delivery of iron to cells. Mediates iron uptake in capsule cells of the developing kidney. Delivery to lysosomes by the cargo receptor NCOA4 for autophagic degradation and release or iron. The polypeptide is Ferritin light chain (FTL) (Oryctolagus cuniculus (Rabbit)).